The chain runs to 209 residues: Ribonuclease HII (209 aa).

The region spanning 18 to 209 (GLIAGVDEVG…FKPVKALLEG (192 aa)) is the RNase H type-2 domain. Asp-24, Glu-25, and Asp-116 together coordinate a divalent metal cation.

The protein belongs to the RNase HII family. Requires Mn(2+) as cofactor. The cofactor is Mg(2+).

It is found in the cytoplasm. It catalyses the reaction Endonucleolytic cleavage to 5'-phosphomonoester.. Functionally, endonuclease that specifically degrades the RNA of RNA-DNA hybrids. The sequence is that of Ribonuclease HII from Shewanella putrefaciens (strain CN-32 / ATCC BAA-453).